A 355-amino-acid polypeptide reads, in one-letter code: MNQVRKWNIIGGRVIKTGIAVFLTVLVCEFFNIPTIFAVITAIVTIEPTATDSIKKGLVRFPASTIGSAYAMTFTFFLGHQALSYALAAMFTIVTCQKLKLHAGTLVATLTAVAMIPITADHYFTAFLIRLATTSTGIIVSTLVNFFILPPHYVKTISGCTEELFVKTAHIMEEWLNALIEGKVITKETTHNLSKVNLLLHKAVQFVQYEQKDWKYHRHTKKEMRSFLLVQKQLHLLQQIIYHIDNLARTPIETCDWSQNEKEILRRTIHSIISILRNNCNKIDEEHFKLIDELDKQFWNYKNDLAHCKPNQYHHHFSSESIILFEVLSIHDMLEELKQIXEKYEGENQFNCSVH.

Transmembrane regions (helical) follow at residues 19–39 (IAVFLTVLVCEFFNIPTIFAV), 74–94 (FTFFLGHQALSYALAAMFTIV), 109–129 (TLTAVAMIPITADHYFTAFLI), and 131–151 (LATTSTGIIVSTLVNFFILPP).

Belongs to the UPF0421 family.

Its subcellular location is the cell membrane. This is UPF0421 protein BCE_2776 from Bacillus cereus (strain ATCC 10987 / NRS 248).